The chain runs to 54 residues: MFQISLDMISNKINLLGLLPEAYAPFDHIVDVLPIIPILFFLLAFVWQASVKFR.

Residues 1 to 17 (MFQISLDMISNKINLLG) constitute a propeptide that is removed on maturation. The helical transmembrane segment at 29–49 (IVDVLPIIPILFFLLAFVWQA) threads the bilayer.

This sequence belongs to the PsbK family. PSII is composed of 1 copy each of membrane proteins PsbA, PsbB, PsbC, PsbD, PsbE, PsbF, PsbH, PsbI, PsbJ, PsbK, PsbL, PsbM, PsbT, PsbY, PsbZ, Psb30/Ycf12, at least 3 peripheral proteins of the oxygen-evolving complex and a large number of cofactors. It forms dimeric complexes.

The protein resides in the plastid. It is found in the chloroplast thylakoid membrane. In terms of biological role, one of the components of the core complex of photosystem II (PSII). PSII is a light-driven water:plastoquinone oxidoreductase that uses light energy to abstract electrons from H(2)O, generating O(2) and a proton gradient subsequently used for ATP formation. It consists of a core antenna complex that captures photons, and an electron transfer chain that converts photonic excitation into a charge separation. The polypeptide is Photosystem II reaction center protein K (Euglena stellata).